We begin with the raw amino-acid sequence, 146 residues long: Hemoglobin subunit beta (146 aa).

Valine 1 carries the post-translational modification N-acetylvaline. In terms of domain architecture, Globin spans 2-146; sequence HLTDGEKNAL…VANALAHKYH (145 aa). Serine 44 bears the Phosphoserine mark. N6-acetyllysine is present on lysine 59. Histidine 63 is a heme b binding site. An N6-acetyllysine modification is found at lysine 82. Histidine 92 contributes to the heme b binding site. Cysteine 93 is modified (S-nitrosocysteine). Lysine 144 carries the N6-acetyllysine modification.

Belongs to the globin family. Heterotetramer of two alpha chains and two beta chains. Red blood cells.

Involved in oxygen transport from the lung to the various peripheral tissues. The sequence is that of Hemoglobin subunit beta from Otospermophilus beecheyi (California ground squirrel).